A 132-amino-acid chain; its full sequence is Small ribosomal subunit protein uS8 (132 aa).

It belongs to the universal ribosomal protein uS8 family. As to quaternary structure, part of the 30S ribosomal subunit. Contacts proteins S5 and S12.

In terms of biological role, one of the primary rRNA binding proteins, it binds directly to 16S rRNA central domain where it helps coordinate assembly of the platform of the 30S subunit. This Xanthomonas oryzae pv. oryzae (strain MAFF 311018) protein is Small ribosomal subunit protein uS8.